Here is a 300-residue protein sequence, read N- to C-terminus: SNAP25 homologous protein SNAP33 (300 aa).

Disordered stretches follow at residues methionine 1–phenylalanine 76 and tryptophan 176–alanine 228. Serine 29 carries the post-translational modification Phosphoserine. The span at threonine 38–proline 49 shows a compositional bias: polar residues. Residues threonine 190–leucine 208 are compositionally biased toward basic and acidic residues. The t-SNARE coiled-coil homology domain maps to glutamate 235–leucine 297.

It belongs to the SNAP-25 family. Interacts with the cytokinesis-specific syntaxin KNOLLE and with SYP121. Binds to EXO70B2. As to expression, ubiquitous, with a strong expression in root tips, ovules, very young leaves, vascular tissue, hydathodes, stipules and the abscission and dehiscence zones of the siliques.

It localises to the membrane. In terms of biological role, t-SNARE involved in diverse vesicle trafficking and membrane fusion processes, including cell plate formation. May function in the secretory pathway. The protein is SNAP25 homologous protein SNAP33 of Arabidopsis thaliana (Mouse-ear cress).